The primary structure comprises 430 residues: Signal recognition particle receptor FtsY (430 aa).

The segment at 75 to 95 (DTGELPAVGDDATVPRDSPRH) is disordered. GTP-binding positions include 238–245 (GVNGTGKT), 320–324 (DTAGR), and 382–385 (TKLD).

It belongs to the GTP-binding SRP family. FtsY subfamily. As to quaternary structure, part of the signal recognition particle protein translocation system, which is composed of SRP and FtsY.

The protein resides in the cell membrane. Its subcellular location is the cytoplasm. It catalyses the reaction GTP + H2O = GDP + phosphate + H(+). Functionally, involved in targeting and insertion of nascent membrane proteins into the cytoplasmic membrane. Acts as a receptor for the complex formed by the signal recognition particle (SRP) and the ribosome-nascent chain (RNC). This chain is Signal recognition particle receptor FtsY, found in Mycobacterium leprae (strain TN).